Here is a 224-residue protein sequence, read N- to C-terminus: Menaquinol:cytochrome c reductase cytochrome b subunit (224 aa).

The helical transmembrane segment at 37–57 (FSAFVYCFGGLTFFVTVIQIL) threads the bilayer. Tyr-42 lines the heme b pocket. Cys-43 is a heme c binding site. Residues Arg-91, His-94, His-108, and Arg-111 each coordinate heme b. 3 helical membrane passes run 96–116 (WGAS…FFQG), 126–146 (WIVG…GYLL), and 195–215 (IHVF…FLMI). Heme b contacts are provided by His-196 and His-211. Residues Arg-216 and Ile-220 each contribute to the heme c site. Ser-221 contributes to the heme b binding site.

The protein belongs to the cytochrome b family. In terms of assembly, the main subunits of the menaquinol:cytochrome c complex are a Rieske-type iron-sulfur protein (QcrA), a cytochrome b (QcrB) and a cytochrome c (QcrC). Heme b is required as a cofactor. Heme c serves as cofactor.

It is found in the cell membrane. In terms of biological role, component of the menaquinol:cytochrome c reductase complex. This chain is Menaquinol:cytochrome c reductase cytochrome b subunit (qcrB), found in Geobacillus thermodenitrificans.